Reading from the N-terminus, the 131-residue chain is Anaerobic and virulence modulator AnvM (131 aa).

Its function is as follows. Plays an essential role by modulating the expression of hundreds of genes including quorum sensing system genes and oxidative stress resistance genes under both aerobic and anaerobic conditions. The protein is Anaerobic and virulence modulator AnvM of Pseudomonas aeruginosa (strain ATCC 15692 / DSM 22644 / CIP 104116 / JCM 14847 / LMG 12228 / 1C / PRS 101 / PAO1).